Consider the following 62-residue polypeptide: UPF0434 protein RL4569 (62 aa).

The protein belongs to the UPF0434 family.

The polypeptide is UPF0434 protein RL4569 (Rhizobium johnstonii (strain DSM 114642 / LMG 32736 / 3841) (Rhizobium leguminosarum bv. viciae)).